We begin with the raw amino-acid sequence, 268 residues long: Taurine import ATP-binding protein TauB (268 aa).

One can recognise an ABC transporter domain in the interval 4-236 (LSIENISMRF…MGVNADLREV (233 aa)). 41–48 (GPSGCGKT) serves as a coordination point for ATP.

Belongs to the ABC transporter superfamily. Taurine importer (TC 3.A.1.17.1) family. In terms of assembly, the complex is composed of two ATP-binding proteins (TauB), two transmembrane proteins (TauC) and a solute-binding protein (TauA).

Its subcellular location is the cell inner membrane. It catalyses the reaction taurine(out) + ATP + H2O = taurine(in) + ADP + phosphate + H(+). Its function is as follows. Part of the ABC transporter complex TauABC involved in taurine import. Responsible for energy coupling to the transport system. This is Taurine import ATP-binding protein TauB from Ruegeria pomeroyi (strain ATCC 700808 / DSM 15171 / DSS-3) (Silicibacter pomeroyi).